Consider the following 110-residue polypeptide: Mobility group protein 1B (110 aa).

The segment at residues 5 to 71 is a DNA-binding region (HMG box); the sequence is PKRPLSAYML…NYIRALQEYE (67 aa). Over residues 71–81 the composition is skewed to basic and acidic residues; sequence ERNGGGGDDKG. Residues 71–110 form a disordered region; sequence ERNGGGGDDKGKKRKGAAPKKGAGKKSKKGAHSDDDGDSE. The span at 82–100 shows a compositional bias: basic residues; sequence KKRKGAAPKKGAGKKSKKG.

It belongs to the HMGB family.

Its subcellular location is the nucleus. It is found in the chromosome. Functionally, found in condensed chromomeres. Binds preferentially to AT-rich DNA. The protein is Mobility group protein 1B (HMG1B) of Chironomus tentans (Midge).